Here is a 170-residue protein sequence, read N- to C-terminus: Transcriptional repressor NrdR (170 aa).

The segment at 3–34 (CPFCGTQDTKVVDSRLVSEGAQVRRRRTCIHC) is a zinc-finger region. Residues 49–139 (PKLIKSDGSR…VYRSFKDISE (91 aa)) enclose the ATP-cone domain. The interval 151–170 (SVSIPKSKKTAPESKKEDQA) is disordered. Residues 160–170 (TAPESKKEDQA) are compositionally biased toward basic and acidic residues.

The protein belongs to the NrdR family. Zn(2+) serves as cofactor.

Its function is as follows. Negatively regulates transcription of bacterial ribonucleotide reductase nrd genes and operons by binding to NrdR-boxes. The polypeptide is Transcriptional repressor NrdR (Marinomonas sp. (strain MWYL1)).